The sequence spans 266 residues: Beta-lactamase OXA-19 (266 aa).

A signal peptide spans 1-20 (MKTFAAYVITACLSSTALAS). Catalysis depends on serine 67, which acts as the Acyl-ester intermediate. The residue at position 70 (lysine 70) is an N6-carboxylysine. 205–207 (KTG) provides a ligand contact to substrate.

Belongs to the class-D beta-lactamase family.

It catalyses the reaction a beta-lactam + H2O = a substituted beta-amino acid. In Pseudomonas aeruginosa, this protein is Beta-lactamase OXA-19 (bla).